The following is a 116-amino-acid chain: Spermadhesin Z13 (116 aa).

2 cysteine pairs are disulfide-bonded: Cys-14–Cys-35 and Cys-58–Cys-79. Positions Cys-14 to Val-115 constitute a CUB domain.

The protein belongs to the spermadhesin family. Homodimer; disulfide-linked. As to expression, seminal plasma.

The protein localises to the secreted. Its function is as follows. May be involved in the fertilization process. This is Spermadhesin Z13 from Bos taurus (Bovine).